Here is a 130-residue protein sequence, read N- to C-terminus: Small ribosomal subunit protein uS8 (130 aa).

It belongs to the universal ribosomal protein uS8 family. In terms of assembly, part of the 30S ribosomal subunit.

One of the primary rRNA binding proteins, it binds directly to 16S rRNA central domain where it helps coordinate assembly of the platform of the 30S subunit. In Methanosphaerula palustris (strain ATCC BAA-1556 / DSM 19958 / E1-9c), this protein is Small ribosomal subunit protein uS8.